We begin with the raw amino-acid sequence, 338 residues long: Phenylalanine--tRNA ligase alpha subunit (338 aa).

Glu-252 provides a ligand contact to Mg(2+).

It belongs to the class-II aminoacyl-tRNA synthetase family. Phe-tRNA synthetase alpha subunit type 1 subfamily. As to quaternary structure, tetramer of two alpha and two beta subunits. It depends on Mg(2+) as a cofactor.

It is found in the cytoplasm. The catalysed reaction is tRNA(Phe) + L-phenylalanine + ATP = L-phenylalanyl-tRNA(Phe) + AMP + diphosphate + H(+). The polypeptide is Phenylalanine--tRNA ligase alpha subunit (Pseudomonas aeruginosa (strain ATCC 15692 / DSM 22644 / CIP 104116 / JCM 14847 / LMG 12228 / 1C / PRS 101 / PAO1)).